The sequence spans 61 residues: Large ribosomal subunit protein eL37 (61 aa).

Zn(2+)-binding residues include C19, C22, C34, and C37. Residues 19 to 37 form a C4-type zinc finger; that stretch reads CRRCGRNSFNVRKGYCAAC.

Belongs to the eukaryotic ribosomal protein eL37 family. Zn(2+) is required as a cofactor.

In terms of biological role, binds to the 23S rRNA. This is Large ribosomal subunit protein eL37 (rpl37e) from Sulfurisphaera tokodaii (strain DSM 16993 / JCM 10545 / NBRC 100140 / 7) (Sulfolobus tokodaii).